Consider the following 287-residue polypeptide: Beta-lactamase GES-2 (287 aa).

The first 18 residues, 1 to 18 (MRFIHALLLAGIAHSAYA), serve as a signal peptide directing secretion. The cysteines at positions 63 and 233 are disulfide-linked. Ser-64 acts as the Nucleophile; acyl-ester intermediate in catalysis. 3 residues coordinate a beta-lactam: Lys-67, Ser-125, and Glu-161.

This sequence belongs to the class-A beta-lactamase family.

The enzyme catalyses a beta-lactam + H2O = a substituted beta-amino acid. Inhibited by the beta-lactamase-blocking agents clavulanic acid, sulbactam and tazobactam. In terms of biological role, extended-spectrum beta-lactamase (ESBL) which confers resistance to penicillins, as well as first, third and fourth-generation cephalosporins. Has modest carbapenem-hydrolyzing activity. Has cefotaxime-hydrolyzing activity. This Pseudomonas aeruginosa protein is Beta-lactamase GES-2.